A 429-amino-acid polypeptide reads, in one-letter code: Glucose-1-phosphate adenylyltransferase (429 aa).

Residues glycine 162, glutamate 177–lysine 178, and serine 209 each bind alpha-D-glucose 1-phosphate.

Belongs to the bacterial/plant glucose-1-phosphate adenylyltransferase family. As to quaternary structure, homotetramer.

The enzyme catalyses alpha-D-glucose 1-phosphate + ATP + H(+) = ADP-alpha-D-glucose + diphosphate. It functions in the pathway glycan biosynthesis; glycogen biosynthesis. Its activity is regulated as follows. Activated by 3-phosphoglycerate and inhibited by phosphate. Its function is as follows. Involved in the biosynthesis of ADP-glucose, a building block required for the elongation reactions to produce glycogen. Catalyzes the reaction between ATP and alpha-D-glucose 1-phosphate (G1P) to produce pyrophosphate and ADP-Glc. In Nostoc sp. (strain PCC 7120 / SAG 25.82 / UTEX 2576), this protein is Glucose-1-phosphate adenylyltransferase.